The primary structure comprises 874 residues: Alanine--tRNA ligase (874 aa).

His564, His568, Cys665, and His669 together coordinate Zn(2+).

Belongs to the class-II aminoacyl-tRNA synthetase family. It depends on Zn(2+) as a cofactor.

It is found in the cytoplasm. It carries out the reaction tRNA(Ala) + L-alanine + ATP = L-alanyl-tRNA(Ala) + AMP + diphosphate. Functionally, catalyzes the attachment of alanine to tRNA(Ala) in a two-step reaction: alanine is first activated by ATP to form Ala-AMP and then transferred to the acceptor end of tRNA(Ala). Also edits incorrectly charged Ser-tRNA(Ala) and Gly-tRNA(Ala) via its editing domain. This is Alanine--tRNA ligase from Delftia acidovorans (strain DSM 14801 / SPH-1).